The primary structure comprises 408 residues: 3-phosphoshikimate 1-carboxyvinyltransferase (408 aa).

Residues Lys20, Ser21, and Arg25 each contribute to the 3-phosphoshikimate site. Lys20 contributes to the phosphoenolpyruvate binding site. Residue Arg111 coordinates phosphoenolpyruvate. Residues Ser151, Ser152, Gln153, Ser178, Asp293, and Lys320 each coordinate 3-phosphoshikimate. Gln153 is a phosphoenolpyruvate binding site. Asp293 (proton acceptor) is an active-site residue. Residues Arg324, Arg365, and Lys389 each contribute to the phosphoenolpyruvate site.

It belongs to the EPSP synthase family. In terms of assembly, monomer.

Its subcellular location is the cytoplasm. The enzyme catalyses 3-phosphoshikimate + phosphoenolpyruvate = 5-O-(1-carboxyvinyl)-3-phosphoshikimate + phosphate. The protein operates within metabolic intermediate biosynthesis; chorismate biosynthesis. Functionally, catalyzes the transfer of the enolpyruvyl moiety of phosphoenolpyruvate (PEP) to the 5-hydroxyl of shikimate-3-phosphate (S3P) to produce enolpyruvyl shikimate-3-phosphate and inorganic phosphate. This Sulfurisphaera tokodaii (strain DSM 16993 / JCM 10545 / NBRC 100140 / 7) (Sulfolobus tokodaii) protein is 3-phosphoshikimate 1-carboxyvinyltransferase.